The sequence spans 103 residues: MVKHSKGYRTRTRKLLTKNVRERGAVPRLSLLMEEFKEGDYVVIKINPSVHKGMPHRRYHGKVGVIQGKRGKAYIVRVTLGDKEKVIIVRPEHLAKFNGIKNG.

This sequence belongs to the eukaryotic ribosomal protein eL21 family.

The chain is Large ribosomal subunit protein eL21 from Sulfurisphaera tokodaii (strain DSM 16993 / JCM 10545 / NBRC 100140 / 7) (Sulfolobus tokodaii).